Reading from the N-terminus, the 156-residue chain is Small ribosomal subunit protein uS7 (156 aa).

It belongs to the universal ribosomal protein uS7 family. Part of the 30S ribosomal subunit. Contacts proteins S9 and S11.

In terms of biological role, one of the primary rRNA binding proteins, it binds directly to 16S rRNA where it nucleates assembly of the head domain of the 30S subunit. Is located at the subunit interface close to the decoding center, probably blocks exit of the E-site tRNA. This Deinococcus radiodurans (strain ATCC 13939 / DSM 20539 / JCM 16871 / CCUG 27074 / LMG 4051 / NBRC 15346 / NCIMB 9279 / VKM B-1422 / R1) protein is Small ribosomal subunit protein uS7.